The primary structure comprises 479 residues: MSTSAKALTKRLIEIPEMRRIQHLHFIGIGGSGMCGIAEVMNNQGYKVSGSDITESLVTKRLEQIGIDINIGHDSKNIANADVIVVSSAIDRSNPEVKAALEARLPVVRRADMLGELMRYRHGIAIAGAHGKTTTTSLLTTMMAEGNLDPTYVIGGKLNASGKNAALGSSRFLIAEADESDASFLSLHPMAAIVTNIDQDHMETYGNSFDKLKAAYIQFLQNMPFYGLAVVCGDDPELYAMIDDIGRPVLTFGLEPFNDVQAVDLVTEGTKTHFTVLRRDHEPLRLTLNIPGVHNVYNALAAITMATDEGVDDAAITRALQKFEGVGRRFEQHASVTIDDGDVLLIDDYGHHPKEVDATIKAARQSFPERRLVMLFQPHRYSRTRDCFDDFVEVLSSVDELLLLDVYSAGESPIAGADTKALARSIRLRGAVEPTIVDKKNIAAVMQRLLKANDMLITQGAGNVGQIAIELAANDLYIK.

Residue 128–134 (GAHGKTT) coordinates ATP.

This sequence belongs to the MurCDEF family.

Its subcellular location is the cytoplasm. The catalysed reaction is UDP-N-acetyl-alpha-D-muramate + L-alanine + ATP = UDP-N-acetyl-alpha-D-muramoyl-L-alanine + ADP + phosphate + H(+). It participates in cell wall biogenesis; peptidoglycan biosynthesis. In terms of biological role, cell wall formation. The protein is UDP-N-acetylmuramate--L-alanine ligase of Psychrobacter arcticus (strain DSM 17307 / VKM B-2377 / 273-4).